The primary structure comprises 166 residues: MDTEEIKEEMQEAAEAAIENAVETAELETAAIKAEGAAAAAEQSAEQAAVMAATLAASVEANAAQQIAEHSEQVQTQEEKISWLENQVMAMASNLQMMQEAVTALTVSQSLTPEPSPVPAVEVEAMPEAVTVEILPESAGDQQEAEPVPSVGDQQETAPRKRFRAI.

The tract at residues 134-166 is disordered; that stretch reads ILPESAGDQQEAEPVPSVGDQQETAPRKRFRAI.

In terms of assembly, heterodimer of P6 and P9; further multimerizes as hexamers of heterodimers. Part of the dodecameric portal complex that is composed of the packaging efficiency factor P6, the DNA packaging ATPase P9, and the internal heterododecamer P20/P22 which spans the virion inner membrane.

It localises to the virion. Its function is as follows. Together with the packaging ATPase P9, forms the external part of the portal vertex that is embeded in the capsid and which plays critical roles in genome packaging and genome ejection. Both proteins multimerize as a single ring-shaped heterdodecamer arranged around a central channel. The polypeptide is Packaging efficiency factor P6 (VI) (Acinetobacter calcoaceticus (Arthrobacter siderocapsulatus)).